Here is a 119-residue protein sequence, read N- to C-terminus: uncharacterized protein (119 aa).

Positions 1-30 (MCPECFFLMLCFCGYCSSSSSSFRSSPVYG) are cleaved as a signal peptide.

This is an uncharacterized protein from Escherichia coli (strain UTI89 / UPEC).